A 318-amino-acid polypeptide reads, in one-letter code: UPF0725 protein At3g44770 (318 aa).

It belongs to the UPF0725 (EMB2204) family.

This is UPF0725 protein At3g44770 from Arabidopsis thaliana (Mouse-ear cress).